A 439-amino-acid polypeptide reads, in one-letter code: Ribosomal protein uS12 methylthiotransferase RimO (439 aa).

One can recognise an MTTase N-terminal domain in the interval 3-113; the sequence is HKVGFVSLGC…VVNAVHQHLP (111 aa). [4Fe-4S] cluster is bound by residues Cys12, Cys48, Cys77, Cys144, Cys148, and Cys151. The 238-residue stretch at 130-367 folds into the Radical SAM core domain; the sequence is LTPRHYAYLK…MQVQAEISRN (238 aa). The region spanning 370–436 is the TRAM domain; the sequence is KNKIGSTQTV…DYDLYGDLEY (67 aa).

Belongs to the methylthiotransferase family. RimO subfamily. The cofactor is [4Fe-4S] cluster.

Its subcellular location is the cytoplasm. It carries out the reaction L-aspartate(89)-[ribosomal protein uS12]-hydrogen + (sulfur carrier)-SH + AH2 + 2 S-adenosyl-L-methionine = 3-methylsulfanyl-L-aspartate(89)-[ribosomal protein uS12]-hydrogen + (sulfur carrier)-H + 5'-deoxyadenosine + L-methionine + A + S-adenosyl-L-homocysteine + 2 H(+). Catalyzes the methylthiolation of an aspartic acid residue of ribosomal protein uS12. This Legionella pneumophila (strain Corby) protein is Ribosomal protein uS12 methylthiotransferase RimO.